The following is a 103-amino-acid chain: Large ribosomal subunit protein bL21 (103 aa).

It belongs to the bacterial ribosomal protein bL21 family. As to quaternary structure, part of the 50S ribosomal subunit. Contacts protein L20.

This protein binds to 23S rRNA in the presence of protein L20. The sequence is that of Large ribosomal subunit protein bL21 from Clostridium kluyveri (strain NBRC 12016).